The primary structure comprises 259 residues: Protein-L-isoaspartate O-methyltransferase (259 aa).

The segment at 1-25 (MRKRVDPPAGGRLAPGITPANSNTR) is disordered. Ser107 is a catalytic residue.

This sequence belongs to the methyltransferase superfamily. L-isoaspartyl/D-aspartyl protein methyltransferase family.

Its subcellular location is the cytoplasm. The catalysed reaction is [protein]-L-isoaspartate + S-adenosyl-L-methionine = [protein]-L-isoaspartate alpha-methyl ester + S-adenosyl-L-homocysteine. Its function is as follows. Catalyzes the methyl esterification of L-isoaspartyl residues in peptides and proteins that result from spontaneous decomposition of normal L-aspartyl and L-asparaginyl residues. It plays a role in the repair and/or degradation of damaged proteins. This is Protein-L-isoaspartate O-methyltransferase from Bordetella bronchiseptica (strain ATCC BAA-588 / NCTC 13252 / RB50) (Alcaligenes bronchisepticus).